Here is a 292-residue protein sequence, read N- to C-terminus: Mitochondrial ornithine transporter 1 (292 aa).

3 Solcar repeats span residues 11–97, 105–196, and 211–292; these read EGAI…CSKF, SPLG…VKKS, and SKIW…LSAL. Transmembrane regions (helical) follow at residues 14–34, 69–89, 104–124, 171–187, 213–233, and 267–287; these read ILDI…EFPF, FFQG…TLFV, VSPL…ASLV, GQSG…VAWF, IWEL…SIFP, and GLGI…YIFE.

The protein belongs to the mitochondrial carrier (TC 2.A.29) family.

It is found in the mitochondrion inner membrane. Its function is as follows. Required for arginine biosynthesis. Transports ornithine synthesized from glutamate in the mitochondrial matrix to the cytosol, where it is converted to arginine. This chain is Mitochondrial ornithine transporter 1 (ORT1), found in Saccharomyces cerevisiae (strain ATCC 204508 / S288c) (Baker's yeast).